Here is a 453-residue protein sequence, read N- to C-terminus: GTPase Der (453 aa).

EngA-type G domains are found at residues 4 to 169 and 177 to 352; these read PIVA…PPVT and IKIA…EEHK. GTP contacts are provided by residues 10–17, 57–61, 120–123, 183–190, 230–234, and 295–298; these read GRPNVGKS, DTGGL, NKCE, DTAGI, and NKWD. The KH-like domain occupies 353–438; sequence RRVSTSVINE…PIRLLWRSKK (86 aa).

This sequence belongs to the TRAFAC class TrmE-Era-EngA-EngB-Septin-like GTPase superfamily. EngA (Der) GTPase family. Associates with the 50S ribosomal subunit.

GTPase that plays an essential role in the late steps of ribosome biogenesis. In Nostoc sp. (strain PCC 7120 / SAG 25.82 / UTEX 2576), this protein is GTPase Der.